The following is a 329-amino-acid chain: GTP 3',8-cyclase (329 aa).

Residues 8–234 enclose the Radical SAM core domain; that stretch reads AFARKFYYLR…QLRQRSDGPA (227 aa). R17 serves as a coordination point for GTP. [4Fe-4S] cluster-binding residues include C24 and C28. Y30 contacts S-adenosyl-L-methionine. C31 is a [4Fe-4S] cluster binding site. R68 is a binding site for GTP. G72 contributes to the S-adenosyl-L-methionine binding site. T99 is a GTP binding site. Residue S123 coordinates S-adenosyl-L-methionine. K160 contributes to the GTP binding site. An S-adenosyl-L-methionine-binding site is contributed by M194. [4Fe-4S] cluster contacts are provided by C257 and C260. 262-264 is a GTP binding site; the sequence is RLR. C274 provides a ligand contact to [4Fe-4S] cluster.

The protein belongs to the radical SAM superfamily. MoaA family. As to quaternary structure, monomer and homodimer. [4Fe-4S] cluster serves as cofactor.

The catalysed reaction is GTP + AH2 + S-adenosyl-L-methionine = (8S)-3',8-cyclo-7,8-dihydroguanosine 5'-triphosphate + 5'-deoxyadenosine + L-methionine + A + H(+). The protein operates within cofactor biosynthesis; molybdopterin biosynthesis. In terms of biological role, catalyzes the cyclization of GTP to (8S)-3',8-cyclo-7,8-dihydroguanosine 5'-triphosphate. This Salmonella heidelberg (strain SL476) protein is GTP 3',8-cyclase.